A 164-amino-acid polypeptide reads, in one-letter code: Thiol peroxidase (164 aa).

Positions 16–162 (LQVGDIAKDF…YEAAINAAKI (147 aa)) constitute a Thioredoxin domain. The Cysteine sulfenic acid (-SOH) intermediate role is filled by cysteine 58. An intrachain disulfide couples cysteine 58 to cysteine 92.

It belongs to the peroxiredoxin family. Tpx subfamily. In terms of assembly, homodimer.

It catalyses the reaction a hydroperoxide + [thioredoxin]-dithiol = an alcohol + [thioredoxin]-disulfide + H2O. Its function is as follows. Thiol-specific peroxidase that catalyzes the reduction of hydrogen peroxide and organic hydroperoxides to water and alcohols, respectively. Plays a role in cell protection against oxidative stress by detoxifying peroxides. The chain is Thiol peroxidase from Streptococcus agalactiae serotype III (strain NEM316).